Consider the following 160-residue polypeptide: Troponin C, skeletal muscle (160 aa).

EF-hand domains follow at residues glutamate 15–asparagine 50, proline 51–glutamate 86, lysine 91–proline 126, and valine 127–glutamine 160. Ca(2+)-binding residues include aspartate 28, aspartate 30, aspartate 34, glutamate 39, aspartate 64, aspartate 66, serine 68, threonine 70, glutamate 75, aspartate 104, asparagine 106, aspartate 108, glutamate 115, aspartate 140, asparagine 142, aspartate 144, lysine 146, and glutamate 151.

This sequence belongs to the troponin C family.

Functionally, troponin is the central regulatory protein of striated muscle contraction. Tn consists of three components: Tn-I which is the inhibitor of actomyosin ATPase, Tn-T which contains the binding EF-hand for tropomyosin and Tn-C. The binding of calcium to Tn-C abolishes the inhibitory action of Tn on actin filaments. This is Troponin C, skeletal muscle from Anguilla anguilla (European freshwater eel).